Reading from the N-terminus, the 149-residue chain is Deoxyuridine 5'-triphosphate nucleotidohydrolase (149 aa).

Residues 68–70 (RSG), N81, 85–87 (LID), and M95 contribute to the substrate site.

Belongs to the dUTPase family. The cofactor is Mg(2+).

It catalyses the reaction dUTP + H2O = dUMP + diphosphate + H(+). It functions in the pathway pyrimidine metabolism; dUMP biosynthesis; dUMP from dCTP (dUTP route): step 2/2. Functionally, this enzyme is involved in nucleotide metabolism: it produces dUMP, the immediate precursor of thymidine nucleotides and it decreases the intracellular concentration of dUTP so that uracil cannot be incorporated into DNA. This Herminiimonas arsenicoxydans protein is Deoxyuridine 5'-triphosphate nucleotidohydrolase.